We begin with the raw amino-acid sequence, 389 residues long: Succinate--CoA ligase [ADP-forming] subunit beta (389 aa).

Residues 9 to 244 (KEILRKYNVP…LDEEDANEIE (236 aa)) form the ATP-grasp domain. ATP contacts are provided by residues Lys46, 53–55 (GRG), Glu99, Ala102, and Glu107. 2 residues coordinate Mg(2+): Asn199 and Asp213. Residues Asn264 and 321-323 (GIM) contribute to the substrate site.

Belongs to the succinate/malate CoA ligase beta subunit family. Heterotetramer of two alpha and two beta subunits. It depends on Mg(2+) as a cofactor.

The catalysed reaction is succinate + ATP + CoA = succinyl-CoA + ADP + phosphate. It carries out the reaction GTP + succinate + CoA = succinyl-CoA + GDP + phosphate. Its pathway is carbohydrate metabolism; tricarboxylic acid cycle; succinate from succinyl-CoA (ligase route): step 1/1. In terms of biological role, succinyl-CoA synthetase functions in the citric acid cycle (TCA), coupling the hydrolysis of succinyl-CoA to the synthesis of either ATP or GTP and thus represents the only step of substrate-level phosphorylation in the TCA. The beta subunit provides nucleotide specificity of the enzyme and binds the substrate succinate, while the binding sites for coenzyme A and phosphate are found in the alpha subunit. In Cupriavidus pinatubonensis (strain JMP 134 / LMG 1197) (Cupriavidus necator (strain JMP 134)), this protein is Succinate--CoA ligase [ADP-forming] subunit beta.